The sequence spans 458 residues: KAT8 regulatory NSL complex subunit 2 (458 aa).

Lysine 78 participates in a covalent cross-link: Glycyl lysine isopeptide (Lys-Gly) (interchain with G-Cter in SUMO2). The disordered stretch occupies residues 126 to 182 (ELGSQTPESSRSEASRILDEDSWSDGDQEPITVDQTWRGDPDSEADSIDSDQEDPLK). Phosphothreonine is present on threonine 131. Basic and acidic residues predominate over residues 135–144 (SRSEASRILD). Serine 147, serine 149, serine 168, serine 172, and serine 175 each carry phosphoserine. The segment covering 167 to 178 (DSEADSIDSDQE) has biased composition (acidic residues). A required for interaction with other NSL complex members region spans residues 308 to 364 (DVRCSNQSLPMTRHCLTHICQDTNQVLFKCCQGSEEVPCNKPVPVSLSEDPCCPLHF). The interval 419 to 458 (QMAGDGCRSQGPRNSEKAPAPLPQSGIATANGKPEPTSVS) is disordered.

Component of the NSL complex at least composed of KAT8/MOF, KANSL1, KANSL2, KANSL3, MCRS1, PHF20, OGT1/OGT, WDR5 and HCFC1.

Its subcellular location is the nucleus. The protein localises to the mitochondrion. Its function is as follows. Non-catalytic component of the NSL histone acetyltransferase complex, a multiprotein complex that mediates histone H4 acetylation at 'Lys-5'- and 'Lys-8' (H4K5ac and H4K8ac) at transcription start sites and promotes transcription initiation. Required for NSL complex stability and for transcription of intraciliary transport genes in both ciliated and non-ciliated cells by regulating histone H4 acetylation at 'Lys-5'- and 'Lys-12' (H4K5ac and H4K12ac). This is necessary for cilium assembly in ciliated cells and for organization of the microtubule cytoskeleton in non-ciliated cells. Required within the NSL complex to maintain nuclear architecture stability by promoting KAT8-mediated acetylation of lamin LMNA. The sequence is that of KAT8 regulatory NSL complex subunit 2 (KANSL2) from Bos taurus (Bovine).